Here is a 381-residue protein sequence, read N- to C-terminus: tRNA-specific 2-thiouridylase MnmA (381 aa).

ATP contacts are provided by residues 14 to 21 (AMSGGVDS) and M40. C108 (nucleophile) is an active-site residue. Cysteines 108 and 205 form a disulfide. G132 is an ATP binding site. Residues 155-157 (KDQ) form an interaction with tRNA region. C205 (cysteine persulfide intermediate) is an active-site residue. An interaction with tRNA region spans residues 309-310 (RY).

The protein belongs to the MnmA/TRMU family.

The protein localises to the cytoplasm. The catalysed reaction is S-sulfanyl-L-cysteinyl-[protein] + uridine(34) in tRNA + AH2 + ATP = 2-thiouridine(34) in tRNA + L-cysteinyl-[protein] + A + AMP + diphosphate + H(+). Its function is as follows. Catalyzes the 2-thiolation of uridine at the wobble position (U34) of tRNA, leading to the formation of s(2)U34. The polypeptide is tRNA-specific 2-thiouridylase MnmA (Deinococcus geothermalis (strain DSM 11300 / CIP 105573 / AG-3a)).